The chain runs to 493 residues: Cysteine--tRNA ligase (493 aa).

C29 lines the Zn(2+) pocket. The 'HIGH' region signature appears at 31 to 41; the sequence is PTVYDFAHIGN. Positions 227, 252, and 256 each coordinate Zn(2+). The 'KMSKS' region signature appears at 285 to 289; sequence KMSKS. Residue K288 participates in ATP binding.

This sequence belongs to the class-I aminoacyl-tRNA synthetase family. As to quaternary structure, monomer. Requires Zn(2+) as cofactor.

Its subcellular location is the cytoplasm. The enzyme catalyses tRNA(Cys) + L-cysteine + ATP = L-cysteinyl-tRNA(Cys) + AMP + diphosphate. The protein is Cysteine--tRNA ligase of Rhodopseudomonas palustris (strain HaA2).